Here is a 99-residue protein sequence, read N- to C-terminus: Putative septation protein SpoVG (99 aa).

It belongs to the SpoVG family.

Could be involved in septation. The chain is Putative septation protein SpoVG from Onion yellows phytoplasma (strain OY-M).